We begin with the raw amino-acid sequence, 243 residues long: Zinc import ATP-binding protein ZnuC (243 aa).

One can recognise an ABC transporter domain in the interval 8-225 (LNLSNVSYYI…SEFQKLFGHH (218 aa)). 40–47 (GPNGAGKS) serves as a coordination point for ATP.

Belongs to the ABC transporter superfamily. Zinc importer (TC 3.A.1.15.5) family. The complex is composed of two ATP-binding proteins (ZnuC), two transmembrane proteins (ZnuB) and a solute-binding protein (ZnuA).

It is found in the cell inner membrane. The enzyme catalyses Zn(2+)(out) + ATP(in) + H2O(in) = Zn(2+)(in) + ADP(in) + phosphate(in) + H(+)(in). Its function is as follows. Part of the ABC transporter complex ZnuABC involved in zinc import. Responsible for energy coupling to the transport system. The protein is Zinc import ATP-binding protein ZnuC of Psychrobacter cryohalolentis (strain ATCC BAA-1226 / DSM 17306 / VKM B-2378 / K5).